The chain runs to 553 residues: General alpha-glucoside permease (553 aa).

A compositionally biased stretch (polar residues) spans 1-21; the sequence is MSVDENQLENGQLLSSENEAS. The disordered stretch occupies residues 1–26; that stretch reads MSVDENQLENGQLLSSENEASSPFKE. Residues 1 to 33 lie on the Cytoplasmic side of the membrane; the sequence is MSVDENQLENGQLLSSENEASSPFKESIPSRSS. A helical transmembrane segment spans residues 34–54; sequence LYLIALTVSLLGVQLTWSVEL. Topologically, residues 55 to 72 are extracellular; that stretch reads GYGTPYLFSLGLRKEWTS. The chain crosses the membrane as a helical span at residues 73–93; that stretch reads IIWIAGPLTGILIQPIAGILS. Over 94–111 the chain is Cytoplasmic; that stretch reads DRVNSRIGRRRPFMLCAS. Residues 112-132 traverse the membrane as a helical segment; sequence LLGTFSLFLMGWAPDICLFIF. Over 133–140 the chain is Extracellular; the sequence is SNEVLMKR. The helical transmembrane segment at 141–161 threads the bilayer; that stretch reads VTIVLATISIYLLDVAVNVVM. Over 162–186 the chain is Cytoplasmic; that stretch reads ASTRSLIVDSVRSDQQHEANSWAGR. The chain crosses the membrane as a helical span at residues 187–207; it reads MIGVGNVLGYLLGYLPLYRIF. The Extracellular portion of the chain corresponds to 208-216; it reads SFLNFTQLQ. A helical transmembrane segment spans residues 217–237; sequence VFCVLASISLVLTVTITTIFV. At 238–280 the chain is on the cytoplasmic side; sequence SERRFPPVEHEKSVAGEIFEFFTTMRQSITALPFTLKRICFVQ. The chain crosses the membrane as a helical span at residues 281 to 301; it reads FFAYFGWFPFLFYITTYVGIL. Topologically, residues 302 to 322 are extracellular; that stretch reads YLRHAPKGHEEDWDMATRQGS. A helical transmembrane segment spans residues 323 to 343; it reads FALLLFAIISLAANTALPLLL. Residues 344–424 lie on the Cytoplasmic side of the membrane; it reads EDTEDDEEDE…SKVQIKGLTL (81 aa). The segment at 368–399 is disordered; the sequence is NDLGNIRTGTNTPRLGNLSETTSFRSENEPSR. The segment covering 374 to 392 has biased composition (polar residues); that stretch reads RTGTNTPRLGNLSETTSFR. The chain crosses the membrane as a helical span at residues 425 to 445; the sequence is PILWLSSHVLFGVCMLSTIFL. Over 446–452 the chain is Extracellular; sequence QTSWQAQ. The helical transmembrane segment at 453 to 473 threads the bilayer; that stretch reads AMVAICGLSWACTLWIPYSLF. Over 474–494 the chain is Cytoplasmic; it reads SSEIGKLGLRESSGKMIGVHN. Residues 495-515 form a helical membrane-spanning segment; that stretch reads VFISAPQVLSTIIATIVFIQS. The Extracellular portion of the chain corresponds to 516 to 521; sequence EGSHRD. A helical membrane pass occupies residues 522-542; that stretch reads IADNSIAWVLRIGGISAFLAA. Topologically, residues 543–553 are cytoplasmic; sequence YQCRHLLPINF.

It belongs to the glycoside-pentoside-hexuronide (GPH) cation symporter transporter (TC 2.A.2.4) family.

The protein resides in the membrane. Responsible for the transport of maltose and sucrose into the cell, with the concomitant uptake of protons (symport system). The polypeptide is General alpha-glucoside permease (sut1) (Schizosaccharomyces pombe (strain 972 / ATCC 24843) (Fission yeast)).